The sequence spans 331 residues: MATLSNHNQLDLSNGSHPEEYKIAALVFYSCIFLIGLFVNVTALWVFSCTTKKRTTVTIYMMNVALLDLVFILSLPFRMFYYAKGEWPFGEYFCHILGALVVFYPSLALWLLAFISADRYMAIVQPKYAKELKNTGKAVLACGGVWVMTLTTTVPLLLLYEDPDKASSPATCLKISDITHLKAVNVLNFTRLIFFFLIPLFIMIGCYVVIIHSLLRGQTSKLKPKVKEKSIRIIMTLLLQVLVCFVPFHICFAVLMLQGQENSYSPWGAFTTFLMNLSTCLDVVLYYIVSKQFQARVISVMLYRNYLRSVRRKSVRSGSLRSLSNMNSEML.

Residues 1-26 (MATLSNHNQLDLSNGSHPEEYKIAAL) lie on the Extracellular side of the membrane. A glycan (N-linked (GlcNAc...) asparagine) is linked at Asn14. Residues 27–47 (VFYSCIFLIGLFVNVTALWVF) traverse the membrane as a helical segment. Residues 48–56 (SCTTKKRTT) are Cytoplasmic-facing. A helical transmembrane segment spans residues 57–77 (VTIYMMNVALLDLVFILSLPF). Residues 78–95 (RMFYYAKGEWPFGEYFCH) are Extracellular-facing. Cys94 and Cys172 form a disulfide bridge. A helical transmembrane segment spans residues 96–116 (ILGALVVFYPSLALWLLAFIS). Topologically, residues 117 to 138 (ADRYMAIVQPKYAKELKNTGKA) are cytoplasmic. A helical transmembrane segment spans residues 139–159 (VLACGGVWVMTLTTTVPLLLL). Residues 160-191 (YEDPDKASSPATCLKISDITHLKAVNVLNFTR) are Extracellular-facing. N-linked (GlcNAc...) asparagine glycosylation is present at Asn188. The helical transmembrane segment at 192–212 (LIFFFLIPLFIMIGCYVVIIH) threads the bilayer. Topologically, residues 213–236 (SLLRGQTSKLKPKVKEKSIRIIMT) are cytoplasmic. A helical transmembrane segment spans residues 237-257 (LLLQVLVCFVPFHICFAVLML). Residues 258–268 (QGQENSYSPWG) are Extracellular-facing. A helical membrane pass occupies residues 269–289 (AFTTFLMNLSTCLDVVLYYIV). The Cytoplasmic portion of the chain corresponds to 290–331 (SKQFQARVISVMLYRNYLRSVRRKSVRSGSLRSLSNMNSEML). Ser322 carries the phosphoserine modification.

The protein belongs to the G-protein coupled receptor 1 family. As to expression, expressed in the eye including cornea, retina, iris and ciliary epithelium (at protein level). Expressed in spleen, liver and lymphocytes with highest expression levels in intestinal intraepithelial lymphocytes.

It localises to the cell membrane. The protein resides in the cytoplasmic vesicle membrane. G protein-coupled receptor (GPCR) that plays a role in diverse physiological processes particularly within the immune and nervous systems. Becomes active when triggered by various endogenous ligands including endocannabinoid N-arachidonyl glycine (NAGly), delta-9-tetrahydrocannabinol or resolvin D2/RvD2 derived from the omega-3 fatty acid docosahexaenoic acid (DHA). Upon RvD2 binding, facilitates the resolution of inflammation, aiding in tissue repair and homeostasis. Mechanistically, RvD2 ligation initiates Galphas protein coupling, activation of cAMP-PKA signaling pathway and phosphorylation of STAT3, leading to RvD2-stimulated macrophage phagocytosis. Mediates NAGly-induced process of reorganization of actin filaments and induction of acrosomal exocytosis. Activation by N-arachidonoyl glycine (NAGly) can also induce apoptosis in macrophages. Plays a role in homeostasis of CD8+ subsets of intraepithelial lymphocytes (IELs) (CD8alphaalpha and CD8alphabeta IELs) in small intestine by supporting preferential migration of CD8alphaalpha T-cells to intraepithelial compartment over lamina propria compartment, and by mediating their reconstitution into small intestine after bone marrow transplant. Also participates in hypotensive responses, mediating reduction in intraocular and blood pressure. The sequence is that of N-arachidonyl glycine receptor from Mus musculus (Mouse).